We begin with the raw amino-acid sequence, 268 residues long: Imidazole glycerol phosphate synthase subunit HisF (268 aa).

Active-site residues include Asp-12 and Asp-131.

The protein belongs to the HisA/HisF family. In terms of assembly, heterodimer of HisH and HisF.

The protein resides in the cytoplasm. The catalysed reaction is 5-[(5-phospho-1-deoxy-D-ribulos-1-ylimino)methylamino]-1-(5-phospho-beta-D-ribosyl)imidazole-4-carboxamide + L-glutamine = D-erythro-1-(imidazol-4-yl)glycerol 3-phosphate + 5-amino-1-(5-phospho-beta-D-ribosyl)imidazole-4-carboxamide + L-glutamate + H(+). The protein operates within amino-acid biosynthesis; L-histidine biosynthesis; L-histidine from 5-phospho-alpha-D-ribose 1-diphosphate: step 5/9. Its function is as follows. IGPS catalyzes the conversion of PRFAR and glutamine to IGP, AICAR and glutamate. The HisF subunit catalyzes the cyclization activity that produces IGP and AICAR from PRFAR using the ammonia provided by the HisH subunit. The sequence is that of Imidazole glycerol phosphate synthase subunit HisF from Methanoculleus marisnigri (strain ATCC 35101 / DSM 1498 / JR1).